Here is an 879-residue protein sequence, read N- to C-terminus: Translation initiation factor IF-2 (879 aa).

The segment at 48 to 261 (EAFPPPPEPA…RPHKSKKQRR (214 aa)) is disordered. Positions 82-111 (PAADAAAPPAVTTPPSAAPAGATTSAPSDA) are enriched in low complexity. Pro residues-rich tracts occupy residues 119 to 142 (PPRP…PSGP), 152 to 163 (SPMPRPMPPRPV), and 173 to 197 (PGIP…PPRP). Low complexity predominate over residues 198 to 213 (AAGRAAPGRGAPIRLP). Positions 228–246 (PGVGGRGRGAPGGAFGRGP) are enriched in gly residues. Residues 251 to 260 (SRPHKSKKQR) are compositionally biased toward basic residues. Residues 372 to 543 (PRPPVVTVMG…AILLTADAAL (172 aa)) form the tr-type G domain. A G1 region spans residues 381 to 388 (GHVDHGKT). A GTP-binding site is contributed by 381 to 388 (GHVDHGKT). Residues 406-410 (GITQH) form a G2 region. A G3 region spans residues 431 to 434 (DTPG). GTP-binding positions include 431 to 435 (DTPGH) and 485 to 488 (NKID). The segment at 485-488 (NKID) is G4. The G5 stretch occupies residues 521–523 (SAL).

The protein belongs to the TRAFAC class translation factor GTPase superfamily. Classic translation factor GTPase family. IF-2 subfamily.

It is found in the cytoplasm. In terms of biological role, one of the essential components for the initiation of protein synthesis. Protects formylmethionyl-tRNA from spontaneous hydrolysis and promotes its binding to the 30S ribosomal subunits. Also involved in the hydrolysis of GTP during the formation of the 70S ribosomal complex. The protein is Translation initiation factor IF-2 of Acidothermus cellulolyticus (strain ATCC 43068 / DSM 8971 / 11B).